The chain runs to 196 residues: MISFVSGRVAAVTPDSVIVEVGGFGVQLLATPATIARARVGERARFATSLVVREDSLTLYGFADDDERTVFELLQTASGVGPRLALAMLGVHSPTALRAAVATEDVKALALVPGIGRKTAQRIILELKDRLGTPSTAAAESTSGWRDAVHAGLLNLGYTARQADEAIAAIAGELDDSAAVDTATALRLALATLKRP.

Residues methionine 1–alanine 63 are domain I. Positions aspartate 64–threonine 136 are domain II. The flexible linker stretch occupies residues threonine 136–glutamate 140. The interval serine 141–proline 196 is domain III.

This sequence belongs to the RuvA family. In terms of assembly, homotetramer. Forms an RuvA(8)-RuvB(12)-Holliday junction (HJ) complex. HJ DNA is sandwiched between 2 RuvA tetramers; dsDNA enters through RuvA and exits via RuvB. An RuvB hexamer assembles on each DNA strand where it exits the tetramer. Each RuvB hexamer is contacted by two RuvA subunits (via domain III) on 2 adjacent RuvB subunits; this complex drives branch migration. In the full resolvosome a probable DNA-RuvA(4)-RuvB(12)-RuvC(2) complex forms which resolves the HJ.

The protein resides in the cytoplasm. Its function is as follows. The RuvA-RuvB-RuvC complex processes Holliday junction (HJ) DNA during genetic recombination and DNA repair, while the RuvA-RuvB complex plays an important role in the rescue of blocked DNA replication forks via replication fork reversal (RFR). RuvA specifically binds to HJ cruciform DNA, conferring on it an open structure. The RuvB hexamer acts as an ATP-dependent pump, pulling dsDNA into and through the RuvAB complex. HJ branch migration allows RuvC to scan DNA until it finds its consensus sequence, where it cleaves and resolves the cruciform DNA. In Acidothermus cellulolyticus (strain ATCC 43068 / DSM 8971 / 11B), this protein is Holliday junction branch migration complex subunit RuvA.